A 154-amino-acid chain; its full sequence is Protein X (154 aa).

The mitochondrial targeting sequence stretch occupies residues 68–117 (PCALRFTSARRMETTVNAHQVLPKVLYKRTLGLSAMSTTDLEAYFKDCLF).

Belongs to the orthohepadnavirus protein X family. As to quaternary structure, may form homodimer. May interact with host CEBPA, CFLAR, CREB1, DDB1, E4F1, HBXIP, HSPD1/HSP60, NFKBIA, POLR2E and SMAD4. Interacts with host SMC5-SMC6 complex and induces its degradation. Interacts with host TRPC4AP; leading to prevent ubiquitination of TRPC4AP. Interacts with host PLSCR1; this interaction promotes ubiquitination and degradation of HBx and impairs HBx-mediated cell proliferation. In terms of processing, a fraction may be phosphorylated in insect cells and HepG2 cells, a human hepatoblastoma cell line. Phosphorylated in vitro by host protein kinase C or mitogen-activated protein kinase. N-acetylated in insect cells.

The protein resides in the host cytoplasm. Its subcellular location is the host nucleus. The protein localises to the host mitochondrion. Functionally, multifunctional protein that plays a role in silencing host antiviral defenses and promoting viral transcription. Does not seem to be essential for HBV infection. May be directly involved in development of cirrhosis and liver cancer (hepatocellular carcinoma). Most of cytosolic activities involve modulation of cytosolic calcium. The effect on apoptosis is controversial depending on the cell types in which the studies have been conducted. May induce apoptosis by localizing in mitochondria and causing loss of mitochondrial membrane potential. May also modulate apoptosis by binding host CFLAR, a key regulator of the death-inducing signaling complex (DISC). Promotes viral transcription by using the host E3 ubiquitin ligase DDB1 to target the SMC5-SMC6 complex to proteasomal degradation. This host complex would otherwise bind to viral episomal DNA, and prevents its transcription. Moderately stimulates transcription of many different viral and cellular transcription elements. Promoters and enhancers stimulated by HBx contain DNA binding sites for NF-kappa-B, AP-1, AP-2, c-EBP, ATF/CREB, or the calcium-activated factor NF-AT. The protein is Protein X of Homo sapiens (Human).